A 940-amino-acid chain; its full sequence is Alanine--tRNA ligase (940 aa).

H581, H585, C683, and H687 together coordinate Zn(2+).

This sequence belongs to the class-II aminoacyl-tRNA synthetase family. It depends on Zn(2+) as a cofactor.

The protein resides in the cytoplasm. The catalysed reaction is tRNA(Ala) + L-alanine + ATP = L-alanyl-tRNA(Ala) + AMP + diphosphate. Catalyzes the attachment of alanine to tRNA(Ala) in a two-step reaction: alanine is first activated by ATP to form Ala-AMP and then transferred to the acceptor end of tRNA(Ala). Also edits incorrectly charged Ser-tRNA(Ala) and Gly-tRNA(Ala) via its editing domain. This chain is Alanine--tRNA ligase, found in Leptospira borgpetersenii serovar Hardjo-bovis (strain JB197).